The chain runs to 596 residues: Elongation factor 4 (596 aa).

Residues 2-183 (KNIRNFSIIA…AIVDRIPAPV (182 aa)) form the tr-type G domain. GTP-binding positions include 14–19 (DHGKST) and 130–133 (NKID).

This sequence belongs to the TRAFAC class translation factor GTPase superfamily. Classic translation factor GTPase family. LepA subfamily.

It is found in the cell inner membrane. It catalyses the reaction GTP + H2O = GDP + phosphate + H(+). Its function is as follows. Required for accurate and efficient protein synthesis under certain stress conditions. May act as a fidelity factor of the translation reaction, by catalyzing a one-codon backward translocation of tRNAs on improperly translocated ribosomes. Back-translocation proceeds from a post-translocation (POST) complex to a pre-translocation (PRE) complex, thus giving elongation factor G a second chance to translocate the tRNAs correctly. Binds to ribosomes in a GTP-dependent manner. The chain is Elongation factor 4 from Sulfurimonas denitrificans (strain ATCC 33889 / DSM 1251) (Thiomicrospira denitrificans (strain ATCC 33889 / DSM 1251)).